The chain runs to 637 residues: Keratin, type II cytoskeletal 1 (637 aa).

The segment at 1–187 (MSLQCSSRSL…DPQIQKVKSQ (187 aa)) is head. Arg12 bears the Omega-N-methylarginine mark. Ser21 and Ser24 each carry phosphoserine. Arg49 carries the omega-N-methylarginine modification. Position 67 is a phosphoserine (Ser67). Residues 180 to 328 (QIQKVKSQER…DIDFFSALYQ (149 aa)) are a coiled coil. The tract at residues 188 to 223 (EREQIKSLNDKFASFIDKVRFLEQQNQVLQTKWELL) is coil 1A. One can recognise an IF rod domain in the interval 188–501 (EREQIKSLND…KLLEGEEIRM (314 aa)). Positions 224–243 (QQVDTTTRTQNLDPFFENYI) are linker 1. Positions 244-334 (SILRRKVDSL…ALYQMEMSQM (91 aa)) are coil 1B. Lys284 bears the N6,N6-dimethyllysine mark. The tract at residues 335 to 358 (QTQISETNVVLSMDNNRSLDLDGI) is linker 12. Ser352 carries the post-translational modification Phosphoserine. Residues 359-497 (ISEVKAQYDS…ATYKKLLEGE (139 aa)) are coil 2. A coiled-coil region spans residues 397–483 (DSVRNTKMEI…QELMNTKLAL (87 aa)). The segment at 498-637 (EIRMSGECTP…VSTSYSRGTK (140 aa)) is tail. Disordered regions lie at residues 505–533 (CTPNVSVSVSTSHTSMSGSSSRGGGSGGG) and 563–637 (YGGG…RGTK). The segment covering 509-524 (VSVSVSTSHTSMSGSS) has biased composition (low complexity). An omega-N-methylarginine mark is found at Arg526, Arg585, and Arg607. Gly residues predominate over residues 563–618 (YGGGSGGGSYGGGSGGGSSGSHRGGSGGGGGSSGGSYGGSSGGGRGGSSSGGGGVK). Over residues 624–637 (TVKFVSTSYSRGTK) the composition is skewed to polar residues.

It belongs to the intermediate filament family. Heterotetramer of two type I and two type II keratins. Heterodimer with KRT10. Two heterodimers of KRT1 and KRT10 form a heterotetramer. Forms a heterodimer with KRT14; the interaction is more abundant in the absence of KRT5. Interacts with PLEC isoform 1C, when in a heterodimer with KRT10. Interacts with ITGB1 in the presence of RACK1 and SRC, and with RACK1. Interacts with C1QBP; the association represents a cell surface kininogen receptor. Interacts with EPPK1; interaction is dependent of higher-order structure of intermediate filament. Post-translationally, undergoes deimination of some arginine residues (citrullination). Expressed in the infundibular regions of the ear, the interfollicular epidermis of the back, in the interscale regions containing hair follicles in the tail, and in the soles of the footpads (at protein level).

It localises to the cell membrane. Its subcellular location is the cytoplasm. May regulate the activity of kinases such as PKC and SRC via binding to integrin beta-1 (ITB1) and the receptor of activated protein C kinase 1 (RACK1). In complex with C1QBP is a high affinity receptor for kininogen-1/HMWK. The chain is Keratin, type II cytoskeletal 1 (Krt1) from Mus musculus (Mouse).